The chain runs to 252 residues: Transmembrane ascorbate-dependent reductase CYB561 (252 aa).

M1 bears the N-acetylmethionine mark. Over 1–17 (MESPAGRTPAPGALPYY) the chain is Cytoplasmic. A helical transmembrane segment spans residues 18-38 (VAFSQLLGLTVVAVTGAWLGA). The Cytochrome b561 domain occupies 20–221 (FSQLLGLTVV…FGAVVLYILT (202 aa)). Residues 39-52 (YRGGIAWESALQFN) lie on the Vesicular side of the membrane. The helical transmembrane segment at 53–73 (VHPLCMIIGLVFLQGDALLVY) threads the bilayer. Residues H54, R74, and K81 each coordinate heme b. Residues 74–85 (RVFRNEAKRTTK) are Cytoplasmic-facing. L-ascorbate contacts are provided by K81 and K85. A helical membrane pass occupies residues 86–106 (ILHGLLHVLAFVIALVGLVAV). Residues H88, 117 to 120 (DLYS), and H122 contribute to the heme b site. The Vesicular portion of the chain corresponds to 107 to 125 (FDYHRKKGIADLYSLHSWC). The chain crosses the membrane as a helical span at residues 126–146 (GILVFVLFLAQWLVGLGFFLF). Residues 147–159 (PGASFSLRSRYRP) are Cytoplasmic-facing. R154 provides a ligand contact to L-ascorbate. Residues 160 to 180 (QHVFFGAAIFLLSVGTALLGL) form a helical membrane-spanning segment. Residues H161 and E182 each contribute to the heme b site. The Vesicular segment spans residues 181–199 (KEALLFQLGTKYSAFESEG). Residues 200–220 (VLANVLGLLLVAFGAVVLYIL) form a helical membrane-spanning segment. The Cytoplasmic segment spans residues 221 to 252 (TRADWKRPLQAEEQALSMDFKTLTEGDSPSSQ). K226 contacts heme b. Phosphoserine is present on residues S248 and S250.

The cofactor is heme b.

It localises to the cytoplasmic vesicle. Its subcellular location is the secretory vesicle. The protein localises to the chromaffin granule membrane. The enzyme catalyses monodehydro-L-ascorbate radical(out) + L-ascorbate(in) = monodehydro-L-ascorbate radical(in) + L-ascorbate(out). Transmembrane reductase that uses ascorbate as an electron donor in the cytoplasm and transfers electrons across membranes to reduce monodehydro-L-ascorbate radical in the lumen of secretory vesicles. It is therefore involved the regeneration and homeostasis within secretory vesicles of ascorbate which in turn provides reducing equivalents needed to support the activity of intravesicular enzymes. The chain is Transmembrane ascorbate-dependent reductase CYB561 (CYB561) from Sus scrofa (Pig).